Here is a 345-residue protein sequence, read N- to C-terminus: Adenine deaminase (345 aa).

Zn(2+)-binding residues include His-24, His-26, and His-204. Glu-207 (proton donor) is an active-site residue. A Zn(2+)-binding site is contributed by Asp-285. Residue Asp-286 coordinates substrate.

This sequence belongs to the metallo-dependent hydrolases superfamily. Adenosine and AMP deaminases family. Adenine deaminase type 2 subfamily. Requires Zn(2+) as cofactor.

It catalyses the reaction adenine + H2O + H(+) = hypoxanthine + NH4(+). Catalyzes the hydrolytic deamination of adenine to hypoxanthine. Plays an important role in the purine salvage pathway and in nitrogen catabolism. The chain is Adenine deaminase from Albidiferax ferrireducens (strain ATCC BAA-621 / DSM 15236 / T118) (Rhodoferax ferrireducens).